Here is a 145-residue protein sequence, read N- to C-terminus: Protein SprT-like (145 aa).

One can recognise a SprT-like domain in the interval 4 to 140 (TNYVQEVSLA…VCGNCHGKLI (137 aa)). His-64 is a binding site for Zn(2+). Glu-65 is an active-site residue. Zn(2+) is bound at residue His-68.

The protein belongs to the SprT family. Zn(2+) is required as a cofactor.

The protein resides in the cytoplasm. In Streptococcus pyogenes serotype M18 (strain MGAS8232), this protein is Protein SprT-like.